The following is a 221-amino-acid chain: Guanylate kinase (221 aa).

The Guanylate kinase-like domain maps to 20-199; it reads GLMFILSSPS…CFGKVREILA (180 aa). 27–34 lines the ATP pocket; sequence SPSGAGKT.

This sequence belongs to the guanylate kinase family.

It is found in the cytoplasm. The enzyme catalyses GMP + ATP = GDP + ADP. In terms of biological role, essential for recycling GMP and indirectly, cGMP. This is Guanylate kinase from Novosphingobium aromaticivorans (strain ATCC 700278 / DSM 12444 / CCUG 56034 / CIP 105152 / NBRC 16084 / F199).